We begin with the raw amino-acid sequence, 438 residues long: Serine hydroxymethyltransferase (438 aa).

133–135 contacts (6S)-5,6,7,8-tetrahydrofolate; that stretch reads GHI. Position 239 is an N6-(pyridoxal phosphate)lysine (Lys239).

Belongs to the SHMT family. Homodimer. The cofactor is pyridoxal 5'-phosphate.

It localises to the cytoplasm. It carries out the reaction 5,10-methylenetetrahydromethanopterin + glycine + H2O = 5,6,7,8-tetrahydromethanopterin + L-serine. Its pathway is amino-acid biosynthesis; glycine biosynthesis; glycine from L-serine: step 1/1. Its function is as follows. Catalyzes the reversible interconversion of serine and glycine with tetrahydromethanopterin (H4MPT) serving as the one-carbon carrier. Also exhibits a pteridine-independent aldolase activity toward beta-hydroxyamino acids, producing glycine and aldehydes, via a retro-aldol mechanism. The sequence is that of Serine hydroxymethyltransferase from Archaeoglobus fulgidus (strain ATCC 49558 / DSM 4304 / JCM 9628 / NBRC 100126 / VC-16).